A 211-amino-acid polypeptide reads, in one-letter code: Large ribosomal subunit protein bL25 (211 aa).

Residues 188–211 (APKAAKVSTDDEAAAPAEEAPAAE) form a disordered region. Residues 201-211 (AAPAEEAPAAE) are compositionally biased toward low complexity.

Belongs to the bacterial ribosomal protein bL25 family. CTC subfamily. In terms of assembly, part of the 50S ribosomal subunit; part of the 5S rRNA/L5/L18/L25 subcomplex. Contacts the 5S rRNA. Binds to the 5S rRNA independently of L5 and L18.

In terms of biological role, this is one of the proteins that binds to the 5S RNA in the ribosome where it forms part of the central protuberance. The chain is Large ribosomal subunit protein bL25 from Colwellia psychrerythraea (strain 34H / ATCC BAA-681) (Vibrio psychroerythus).